We begin with the raw amino-acid sequence, 874 residues long: Alanine--tRNA ligase (874 aa).

Residues His564, His568, Cys665, and His669 each contribute to the Zn(2+) site.

Belongs to the class-II aminoacyl-tRNA synthetase family. Zn(2+) serves as cofactor.

It localises to the cytoplasm. The catalysed reaction is tRNA(Ala) + L-alanine + ATP = L-alanyl-tRNA(Ala) + AMP + diphosphate. Functionally, catalyzes the attachment of alanine to tRNA(Ala) in a two-step reaction: alanine is first activated by ATP to form Ala-AMP and then transferred to the acceptor end of tRNA(Ala). Also edits incorrectly charged Ser-tRNA(Ala) and Gly-tRNA(Ala) via its editing domain. This chain is Alanine--tRNA ligase, found in Burkholderia cenocepacia (strain HI2424).